We begin with the raw amino-acid sequence, 427 residues long: Serine--tRNA ligase (427 aa).

An L-serine-binding site is contributed by 235 to 237 (TAE). ATP-binding positions include 266 to 268 (RRE) and V282. Position 289 (E289) interacts with L-serine. 353–356 (EASS) provides a ligand contact to ATP. S389 serves as a coordination point for L-serine.

It belongs to the class-II aminoacyl-tRNA synthetase family. Type-1 seryl-tRNA synthetase subfamily. Homodimer. The tRNA molecule binds across the dimer.

Its subcellular location is the cytoplasm. The enzyme catalyses tRNA(Ser) + L-serine + ATP = L-seryl-tRNA(Ser) + AMP + diphosphate + H(+). It catalyses the reaction tRNA(Sec) + L-serine + ATP = L-seryl-tRNA(Sec) + AMP + diphosphate + H(+). It functions in the pathway aminoacyl-tRNA biosynthesis; selenocysteinyl-tRNA(Sec) biosynthesis; L-seryl-tRNA(Sec) from L-serine and tRNA(Sec): step 1/1. Functionally, catalyzes the attachment of serine to tRNA(Ser). Is also able to aminoacylate tRNA(Sec) with serine, to form the misacylated tRNA L-seryl-tRNA(Sec), which will be further converted into selenocysteinyl-tRNA(Sec). The sequence is that of Serine--tRNA ligase from Chlorobium phaeobacteroides (strain BS1).